Here is a 214-residue protein sequence, read N- to C-terminus: Chaperone protein TorD (214 aa).

Belongs to the TorD/DmsD family. TorD subfamily.

The protein localises to the cytoplasm. In terms of biological role, involved in the biogenesis of TorA. Acts on TorA before the insertion of the molybdenum cofactor and, as a result, probably favors a conformation of the apoenzyme that is competent for acquiring the cofactor. The polypeptide is Chaperone protein TorD (Aeromonas salmonicida (strain A449)).